The sequence spans 83 residues: Small ribosomal subunit protein uS17 (83 aa).

It belongs to the universal ribosomal protein uS17 family. As to quaternary structure, part of the 30S ribosomal subunit.

Its function is as follows. One of the primary rRNA binding proteins, it binds specifically to the 5'-end of 16S ribosomal RNA. The sequence is that of Small ribosomal subunit protein uS17 from Campylobacter jejuni subsp. jejuni serotype O:6 (strain 81116 / NCTC 11828).